The chain runs to 413 residues: ATP-dependent RNA helicase RhlB (413 aa).

A Q motif motif is present at residues 9-37 (QRFADLPLHPQILAALNDQNFEYCTPIQA). Positions 40-217 (LPLTLQGKDV…FEDMNDPEYI (178 aa)) constitute a Helicase ATP-binding domain. Residue 53–60 (AQTGTGKT) coordinates ATP. Positions 163-166 (DEAD) match the DEAD box motif. The 148-residue stretch at 241 to 388 (KMALLMTLLE…VSQYDPDSLI (148 aa)) folds into the Helicase C-terminal domain.

The protein belongs to the DEAD box helicase family. RhlB subfamily. Component of the RNA degradosome, which is a multiprotein complex involved in RNA processing and mRNA degradation.

It is found in the cytoplasm. The catalysed reaction is ATP + H2O = ADP + phosphate + H(+). Its function is as follows. DEAD-box RNA helicase involved in RNA degradation. Has RNA-dependent ATPase activity and unwinds double-stranded RNA. The chain is ATP-dependent RNA helicase RhlB from Actinobacillus succinogenes (strain ATCC 55618 / DSM 22257 / CCUG 43843 / 130Z).